Here is a 621-residue protein sequence, read N- to C-terminus: SH2B adapter protein 2 (621 aa).

At Tyr47 the chain carries Phosphotyrosine. At Ser130 the chain carries Phosphoserine. The tract at residues 143–166 (RRSSPEPDGGATPKAAEPASEPRD) is disordered. In terms of domain architecture, PH spans 186–299 (DIQREGALRF…WVADIQGCVD (114 aa)). Position 303 is a phosphoserine (Ser303). In terms of domain architecture, SH2 spans 409–507 (WFHGTLSRVK…SADITLRSYV (99 aa)). Disordered regions lie at residues 507–528 (VRAQ…PVPA) and 549–611 (PASP…LGRA). Low complexity predominate over residues 552–571 (PSNGAGASSSSGSSSSATSL). At Ser597 the chain carries Phosphoserine. Tyr618 carries the post-translational modification Phosphotyrosine.

It belongs to the SH2B adapter family. In terms of assembly, homodimer. Interacts with KIT/c-KIT, SHC1, EPOR, PDGFR, VAV1 and VAV3. Interacts (via N-terminal region) with SHC1. Interacts (via the phosphorylated C-terminus) with GRB2. Interacts (via its SH2 domain) with EPOR, INSR and KIT. Interacts with GRB2 after B-cell antigen receptor stimulation. Interacts (via PH domain) with VAV3. Interacts with NTRK1, NTRK2 and NTRK3 (phosphorylated); after stimulation of the receptor by its extracellular ligand and subsequent autophosphorylation of the receptor. Binds INSR, GRB2, ASB6 and CAP. Insulin stimulation leads to dissociation of CAP. Binds CBS only when SH2B2/APS has become phosphorylated. INSR binding does not depend on the phosphorylation of SH2B2/APS. In terms of processing, tyrosine phosphorylated by JAK2, KIT and other kinases activated by B-cell receptor in response to stimulation with cytokines, IL3, IL5, PDGF, IGF1, IGF2, CSF2/GM-CSF and cross-linking of the B-cell receptor complex. In terms of tissue distribution, strongly expressed in brain; also expressed in spleen, kidney and skeletal muscle, and at low levels in small intestine and bone marrow. Strongly expressed in B-cell lines, but not T-cell lines. Also expressed in myeloid and fibroblast cell lines.

Its subcellular location is the cytoplasm. It localises to the cell membrane. Functionally, adapter protein for several members of the tyrosine kinase receptor family. Involved in multiple signaling pathways. May be involved in coupling from immunoreceptor to Ras signaling. Acts as a negative regulator of cytokine signaling in collaboration with CBL. Binds to EPOR and suppresses EPO-induced STAT5 activation, possibly through a masking effect on STAT5 docking sites in EPOR. Suppresses PDGF-induced mitogenesis. May induce cytoskeletal reorganization via interaction with VAV3. This chain is SH2B adapter protein 2 (Sh2b2), found in Mus musculus (Mouse).